Here is a 262-residue protein sequence, read N- to C-terminus: Acyl-[acyl-carrier-protein]--UDP-N-acetylglucosamine O-acyltransferase (262 aa).

The protein belongs to the transferase hexapeptide repeat family. LpxA subfamily. Homotrimer.

It is found in the cytoplasm. The catalysed reaction is a (3R)-hydroxyacyl-[ACP] + UDP-N-acetyl-alpha-D-glucosamine = a UDP-3-O-[(3R)-3-hydroxyacyl]-N-acetyl-alpha-D-glucosamine + holo-[ACP]. It participates in glycolipid biosynthesis; lipid IV(A) biosynthesis; lipid IV(A) from (3R)-3-hydroxytetradecanoyl-[acyl-carrier-protein] and UDP-N-acetyl-alpha-D-glucosamine: step 1/6. Its function is as follows. Involved in the biosynthesis of lipid A, a phosphorylated glycolipid that anchors the lipopolysaccharide to the outer membrane of the cell. The polypeptide is Acyl-[acyl-carrier-protein]--UDP-N-acetylglucosamine O-acyltransferase (Paraburkholderia xenovorans (strain LB400)).